A 515-amino-acid chain; its full sequence is Lysosomal acid glucosylceramidase (515 aa).

The first 19 residues, 1 to 19, serve as a signal peptide directing secretion; sequence MAARLIGFFLFQAVSWAYG. 2 disulfide bridges follow: C23–C35 and C37–C42. N-linked (GlcNAc...) asparagine glycans are attached at residues N38 and N78. Residue N165 is glycosylated (N-linked (GlcNAc...) (high mannose) asparagine). Residue E254 is the Proton donor of the active site. Residue N289 is glycosylated (N-linked (GlcNAc...) asparagine). The Nucleophile role is filled by E358. N-linked (GlcNAc...) asparagine glycosylation is present at N480.

The protein belongs to the glycosyl hydrolase 30 family. As to quaternary structure, interacts with saposin-C. Interacts with SCARB2. Interacts with TCP1. Interacts with GRN; this interaction prevents aggregation of GBA1-SCARB2 complex via interaction with HSPA1A upon stress.

It localises to the lysosome membrane. It carries out the reaction a beta-D-glucosyl-(1&lt;-&gt;1')-N-acylsphing-4-enine + H2O = an N-acylsphing-4-enine + D-glucose. The enzyme catalyses a beta-D-galactosyl-(1&lt;-&gt;1')-N-acylsphing-4-enine + H2O = an N-acylsphing-4-enine + D-galactose. The catalysed reaction is cholesteryl 3-beta-D-glucoside + H2O = cholesterol + D-glucose. It catalyses the reaction a beta-D-glucosyl-(1&lt;-&gt;1')-N-acylsphing-4-enine + cholesterol = cholesteryl 3-beta-D-glucoside + an N-acylsphing-4-enine. It carries out the reaction beta-D-glucosyl-(1&lt;-&gt;1')-N-hexadecanoylsphing-4-enine + cholesterol = cholesteryl 3-beta-D-glucoside + N-hexadecanoylsphing-4-enine. The enzyme catalyses beta-D-glucosyl-N-(9Z-octadecenoyl)-sphing-4E-enine + cholesterol = N-(9Z-octadecenoyl)-sphing-4-enine + cholesteryl 3-beta-D-glucoside. The catalysed reaction is beta-D-glucosyl-N-octanoylsphing-4E-enine + cholesterol = N-octanoylsphing-4-enine + cholesteryl 3-beta-D-glucoside. It catalyses the reaction beta-D-glucosyl-N-dodecanoylsphing-4-enine + cholesterol = N-dodecanoylsphing-4-enine + cholesteryl 3-beta-D-glucoside. It carries out the reaction beta-D-glucosyl-(1&lt;-&gt;1)-N-octadecanoylsphing-4-enine + cholesterol = N-octadecanoylsphing-4-enine + cholesteryl 3-beta-D-glucoside. The enzyme catalyses beta-D-glucosyl-(1&lt;-&gt;1')-N-(15Z-tetracosenoyl)-sphing-4-enine + cholesterol = N-(15Z-tetracosenoyl)-sphing-4-enine + cholesteryl 3-beta-D-glucoside. The catalysed reaction is a beta-D-galactosyl-(1&lt;-&gt;1')-N-acylsphing-4-enine + cholesterol = cholesteryl 3-beta-D-galactoside + an N-acylsphing-4-enine. It catalyses the reaction 1-(beta-D-galactosyl)-N-dodecanoylsphing-4-enine + cholesterol = cholesteryl 3-beta-D-galactoside + N-dodecanoylsphing-4-enine. It carries out the reaction a beta-D-xylosyl-(1&lt;-&gt;1')-N-acylsphing-4-enine + cholesterol = cholesteryl 3-beta-D-xyloside + an N-acylsphing-4-enine. The enzyme catalyses beta-D-xylosyl-(1&lt;-&gt;1')-N-(9Z-octadecenoyl)-sphing-4-enine + cholesterol = cholesteryl 3-beta-D-xyloside + N-(9Z-octadecenoyl)-sphing-4-enine. Its pathway is steroid metabolism; cholesterol metabolism. It participates in sphingolipid metabolism. Its activity is regulated as follows. Inhibited by conduritol B epoxide/CBE. Its function is as follows. Glucosylceramidase that catalyzes, within the lysosomal compartment, the hydrolysis of glucosylceramides/GlcCers (such as beta-D-glucosyl-(1&lt;-&gt;1')-N-acylsphing-4-enine) into free ceramides (such as N-acylsphing-4-enine) and glucose. Plays a central role in the degradation of complex lipids and the turnover of cellular membranes. Through the production of ceramides, participates in the PKC-activated salvage pathway of ceramide formation. Catalyzes the glucosylation of cholesterol, through a transglucosylation reaction where glucose is transferred from GlcCer to cholesterol. GlcCer containing mono-unsaturated fatty acids (such as beta-D-glucosyl-N-(9Z-octadecenoyl)-sphing-4-enine) are preferred as glucose donors for cholesterol glucosylation when compared with GlcCer containing same chain length of saturated fatty acids (such as beta-D-glucosyl-N-octadecanoyl-sphing-4-enine). Under specific conditions, may alternatively catalyze the reverse reaction, transferring glucose from cholesteryl 3-beta-D-glucoside to ceramide. Can also hydrolyze cholesteryl 3-beta-D-glucoside producing glucose and cholesterol. Catalyzes the hydrolysis of galactosylceramides/GalCers (such as beta-D-galactosyl-(1&lt;-&gt;1')-N-acylsphing-4-enine), as well as the transfer of galactose between GalCers and cholesterol in vitro, but with lower activity than with GlcCers. Contrary to GlcCer and GalCer, xylosylceramide/XylCer (such as beta-D-xyosyl-(1&lt;-&gt;1')-N-acylsphing-4-enine) is not a good substrate for hydrolysis, however it is a good xylose donor for transxylosylation activity to form cholesteryl 3-beta-D-xyloside. In Mus musculus (Mouse), this protein is Lysosomal acid glucosylceramidase (Gba1).